The following is a 515-amino-acid chain: Heavy metal-associated isoprenylated plant protein 41 (515 aa).

The 69-residue stretch at 376–444 folds into the HMA domain; the sequence is KQRIVLKMDM…KVCMTTIITV (69 aa). C512 is modified (cysteine methyl ester). The S-farnesyl cysteine moiety is linked to residue C512. The propeptide at 513 to 515 is removed in mature form; that stretch reads RIL.

Belongs to the HIPP family.

Its function is as follows. Heavy-metal-binding protein. The polypeptide is Heavy metal-associated isoprenylated plant protein 41 (Arabidopsis thaliana (Mouse-ear cress)).